We begin with the raw amino-acid sequence, 78 residues long: Large ribosomal subunit protein bL28 (78 aa).

The tract at residues Met-1 to Arg-23 is disordered.

The protein belongs to the bacterial ribosomal protein bL28 family.

The chain is Large ribosomal subunit protein bL28 from Marinomonas sp. (strain MWYL1).